The sequence spans 196 residues: Probable GTP-binding protein EngB (196 aa).

An EngB-type G domain is found at 22-196 (NLPEIALAGR…GNWIEDKISQ (175 aa)). GTP contacts are provided by residues 30 to 37 (GRSNVGKS), 57 to 61 (GKTQT), 75 to 78 (DVPG), 142 to 145 (TKMD), and 175 to 177 (FSS). Mg(2+) is bound by residues Ser37 and Thr59.

Belongs to the TRAFAC class TrmE-Era-EngA-EngB-Septin-like GTPase superfamily. EngB GTPase family. Mg(2+) is required as a cofactor.

Necessary for normal cell division and for the maintenance of normal septation. The sequence is that of Probable GTP-binding protein EngB from Lactobacillus acidophilus (strain ATCC 700396 / NCK56 / N2 / NCFM).